The sequence spans 359 residues: Alanine racemase, biosynthetic (359 aa).

Lys-34 (proton acceptor; specific for D-alanine) is an active-site residue. Lys-34 carries the N6-(pyridoxal phosphate)lysine modification. The residue at position 122 (Lys-122) is an N6-carboxylysine. Residue Arg-129 coordinates substrate. Tyr-255 acts as the Proton acceptor; specific for L-alanine in catalysis. Met-303 is a substrate binding site.

This sequence belongs to the alanine racemase family. In terms of assembly, homodimer. The cofactor is pyridoxal 5'-phosphate.

It catalyses the reaction L-alanine = D-alanine. The protein operates within amino-acid biosynthesis; D-alanine biosynthesis; D-alanine from L-alanine: step 1/1. It participates in cell wall biogenesis; peptidoglycan biosynthesis. Catalyzes the interconversion of L-alanine and D-alanine. Provides the D-alanine required for cell wall biosynthesis. This is Alanine racemase, biosynthetic from Escherichia coli (strain K12).